Here is a 418-residue protein sequence, read N- to C-terminus: Glutamyl-tRNA reductase (418 aa).

Substrate contacts are provided by residues 49 to 52, Ser-108, 113 to 115, and Gln-119; these read TCNR and EPQ. Cys-50 acts as the Nucleophile in catalysis. Residue 188–193 coordinates NADP(+); that stretch reads GAGETI.

This sequence belongs to the glutamyl-tRNA reductase family. As to quaternary structure, homodimer.

It carries out the reaction (S)-4-amino-5-oxopentanoate + tRNA(Glu) + NADP(+) = L-glutamyl-tRNA(Glu) + NADPH + H(+). It functions in the pathway porphyrin-containing compound metabolism; protoporphyrin-IX biosynthesis; 5-aminolevulinate from L-glutamyl-tRNA(Glu): step 1/2. In terms of biological role, catalyzes the NADPH-dependent reduction of glutamyl-tRNA(Glu) to glutamate 1-semialdehyde (GSA). The sequence is that of Glutamyl-tRNA reductase from Aliivibrio fischeri (strain MJ11) (Vibrio fischeri).